We begin with the raw amino-acid sequence, 141 residues long: Hemoglobin subunit alpha (141 aa).

The Globin domain occupies 1–141 (VLSAADKANV…VSTVLTSKYR (141 aa)). S3 carries the post-translational modification Phosphoserine. K7 and K11 each carry N6-succinyllysine. Position 16 is an N6-acetyllysine; alternate (K16). K16 is subject to N6-succinyllysine; alternate. Position 40 is an N6-succinyllysine (K40). The residue at position 49 (S49) is a Phosphoserine. H58 provides a ligand contact to O2. Position 87 (H87) interacts with heme b. S102 is subject to Phosphoserine. The residue at position 108 (T108) is a Phosphothreonine. Position 124 is a phosphoserine (S124). Residues T134 and T137 each carry the phosphothreonine modification. S138 carries the phosphoserine modification.

Belongs to the globin family. In terms of assembly, heterotetramer of two alpha chains and two beta chains. As to expression, red blood cells.

In terms of biological role, involved in oxygen transport from the lung to the various peripheral tissues. Functionally, hemopressin acts as an antagonist peptide of the cannabinoid receptor CNR1. Hemopressin-binding efficiently blocks cannabinoid receptor CNR1 and subsequent signaling. The protein is Hemoglobin subunit alpha (HBA) of Sus scrofa (Pig).